Consider the following 316-residue polypeptide: L-lactate dehydrogenase (316 aa).

NAD(+) is bound by residues Val15, Asp36, Arg41, Tyr66, and 80–81 (GA). Substrate is bound by residues Gln83, Arg90, and 122–125 (NPVD). NAD(+) is bound by residues 120–122 (ATN) and Thr145. 150–153 (DTAR) lines the substrate pocket. The beta-D-fructose 1,6-bisphosphate site is built by Arg155 and His170. The active-site Proton acceptor is His177. Tyr222 carries the post-translational modification Phosphotyrosine. Thr231 is a substrate binding site. A disordered region spans residues 287–316 (DPGLSDEEREALRDSARALRDSRADLTVGT). The segment covering 296–310 (EALRDSARALRDSRA) has biased composition (basic and acidic residues).

The protein belongs to the LDH/MDH superfamily. LDH family. In terms of assembly, homotetramer.

It is found in the cytoplasm. It carries out the reaction (S)-lactate + NAD(+) = pyruvate + NADH + H(+). It participates in fermentation; pyruvate fermentation to lactate; (S)-lactate from pyruvate: step 1/1. Allosterically activated by fructose 1,6-bisphosphate (FBP). Its function is as follows. Catalyzes the conversion of lactate to pyruvate. This Salinibacter ruber (strain DSM 13855 / M31) protein is L-lactate dehydrogenase.